The primary structure comprises 346 residues: MEKLARKQVQELTPYLSARRIGGTGDVWLNANESPFNNEYKTDFARLNRYSECQPKALISAYAAYAGVKPEQTLTSRGADEGIELLVRAFCEPGQDAILYCPPTYGMYAISAETIGVERKTVPLTSDWQLDLAGIESNLDNVKLVFVCSPNNPTGNLVKREDIVSLLEMTKDRAIVVMDEAYIDFCPEASTVDLLAQYPNLAILRTLSKAFALAGLRCGFTLANEELINVLLKVIAPYPVPVPVAEIAVQALSEAGLARAKFQVLDLNANRAYLQVGLSMIPGLQVFEGWGNYLLVKFPDGDALFKAAWDTGIILRNSPIENCVRISVGNRDECEKTLGFIRNYYS.

K209 is modified (N6-(pyridoxal phosphate)lysine).

Belongs to the class-II pyridoxal-phosphate-dependent aminotransferase family. Histidinol-phosphate aminotransferase subfamily. Homodimer. It depends on pyridoxal 5'-phosphate as a cofactor.

It catalyses the reaction L-histidinol phosphate + 2-oxoglutarate = 3-(imidazol-4-yl)-2-oxopropyl phosphate + L-glutamate. Its pathway is amino-acid biosynthesis; L-histidine biosynthesis; L-histidine from 5-phospho-alpha-D-ribose 1-diphosphate: step 7/9. In Vibrio parahaemolyticus serotype O3:K6 (strain RIMD 2210633), this protein is Histidinol-phosphate aminotransferase.